The sequence spans 411 residues: Inhibin beta B chain (411 aa).

A signal peptide spans 1–28; it reads MDGLPGRALGAACLLLLVAGWLGPEAWG. The tract at residues 28–69 is disordered; that stretch reads GSPTPPPSPAAPPPPPPPGAPGGSQDTCTSCGGGGGGFRRPE. Positions 29–296 are excised as a propeptide; sequence SPTPPPSPAA…GDSRHRIRKR (268 aa). The span at 30–47 shows a compositional bias: pro residues; sequence PTPPPSPAAPPPPPPPGA. Residue Asn97 is glycosylated (N-linked (GlcNAc...) asparagine). Intrachain disulfides connect Cys300–Cys308, Cys307–Cys376, Cys336–Cys408, and Cys340–Cys410.

The protein belongs to the TGF-beta family. As to quaternary structure, dimeric, linked by one or more disulfide bonds. Inhibin B is a dimer of alpha and beta-B. Activin B is a homodimer of beta-B. Activin AB is a dimer of beta-A and beta-B. Interacts with FST and FSTL3. Activin B interacts with BMPR2. As to expression, uterus, testis, ovary, lung, kidney, brain, CJ7 embryonic stem cells, and possibly in liver.

The protein localises to the secreted. Inhibins and activins inhibit and activate, respectively, the secretion of follitropin by the pituitary gland. Inhibins/activins are involved in regulating a number of diverse functions such as hypothalamic and pituitary hormone secretion, gonadal hormone secretion, germ cell development and maturation, erythroid differentiation, insulin secretion, nerve cell survival, embryonic axial development or bone growth, depending on their subunit composition. Inhibins appear to oppose the functions of activins. In terms of biological role, activin B is a dimer of alpha and beta-B that plays a role in several essential biological processes including embryonic development, stem cell maintenance and differentiation, haematopoiesis, cell proliferation and wound healing. Signals through type I receptor ACVR1C, abundantly expressed in pancreatic beta cells, and type II receptors like ACVR2A. Upon ligand binding, these receptors phosphorylate intracellular signaling mediators SMAD2 and SMAD3, which form a complex with SMAD4, translocate to the nucleus, and regulate gene expression. Plays a crucial role in the induction of hepcidin by inflammation through activation of ACVR1C and subsequent phosphorylation of SMAD1/5/8. Regulates adipocyte lipid metabolism by decreasing non-esterified fatty acids and glycerol release and increases intracellular triglyceride content. Stimulates wound healing by promoting cell migration and hair follicle regeneration through the JNK and ERK signaling pathways downstream of RHOA. Functionally, inhibin B is a dimer of alpha and beta-B that plays a crucial role in the regulation of the reproductive system by inhibiting the secretion of follicle-stimulating hormone (FSH) from the anterior pituitary gland. Thereby, maintains reproductive homeostasis in both males and females. Acts as a more potent suppressor of FSH release than inhibin A. Functions as competitive receptor antagonist binding activin type II receptors with high affinity in the presence of the TGF-beta type III coreceptor/TGFBR3L. The polypeptide is Inhibin beta B chain (Inhbb) (Mus musculus (Mouse)).